A 679-amino-acid polypeptide reads, in one-letter code: Glycine--tRNA ligase beta subunit (679 aa).

Belongs to the class-II aminoacyl-tRNA synthetase family. As to quaternary structure, tetramer of two alpha and two beta subunits.

The protein resides in the cytoplasm. The catalysed reaction is tRNA(Gly) + glycine + ATP = glycyl-tRNA(Gly) + AMP + diphosphate. The sequence is that of Glycine--tRNA ligase beta subunit from Streptococcus pyogenes serotype M18 (strain MGAS8232).